We begin with the raw amino-acid sequence, 160 residues long: Myosin catalytic light chain LC-1, mantle muscle (160 aa).

Blocked amino end (Xaa) is present on X1. EF-hand domains lie at 7-44, 83-118, and 119-153; these read DEIE…LGMN, TAAD…LGER, and ITED…VMAG.

Its function is as follows. In molluscan muscle, calcium regulation is associated with myosin rather than with actin. Muscle myosin contains two types of light chains: the catalytic light chain, essential for ATPase activity, and the regulatory light chain, a calcium-binding protein responsible for Ca(2+) dependent binding and Ca(2+) dependent Mg-ATPase activity. This Todarodes pacificus (Japanese flying squid) protein is Myosin catalytic light chain LC-1, mantle muscle.